Consider the following 488-residue polypeptide: Ankyrin repeat domain-containing protein 13C (488 aa).

Residues 1–60 are disordered; the sequence is MTGEKIRSVRKERKSGLDLLEPDEEPAATGPAKHRGSKIFSGGNHRISRSSSSPGDPDGA. Residues 41 to 59 show a composition bias toward low complexity; it reads SGGNHRISRSSSSPGDPDG. ANK repeat units lie at residues 58–87, 90–119, and 123–152; these read DGAY…IAQK, HGNT…PVKV, and QGWS…QQSR.

It is found in the endoplasmic reticulum membrane. Functionally, acts as a molecular chaperone for G protein-coupled receptors, regulating their biogenesis and exit from the ER. In Danio rerio (Zebrafish), this protein is Ankyrin repeat domain-containing protein 13C (ankrd13c).